We begin with the raw amino-acid sequence, 150 residues long: uncharacterized protein (150 aa).

In terms of domain architecture, HTH asnC-type spans 5–66; the sequence is LDKVDRRLLE…KPNYKKLNLG (62 aa). The H-T-H motif DNA-binding region spans 24 to 43; the sequence is IATLSKKLGIPRTTVHYRIK.

This is an uncharacterized protein from Pyrococcus horikoshii (strain ATCC 700860 / DSM 12428 / JCM 9974 / NBRC 100139 / OT-3).